The following is a 479-amino-acid chain: ATP synthase subunit beta (479 aa).

153-160 (GGAGVGKT) is a binding site for ATP.

It belongs to the ATPase alpha/beta chains family. F-type ATPases have 2 components, CF(1) - the catalytic core - and CF(0) - the membrane proton channel. CF(1) has five subunits: alpha(3), beta(3), gamma(1), delta(1), epsilon(1). CF(0) has three main subunits: a(1), b(2) and c(9-12). The alpha and beta chains form an alternating ring which encloses part of the gamma chain. CF(1) is attached to CF(0) by a central stalk formed by the gamma and epsilon chains, while a peripheral stalk is formed by the delta and b chains.

It is found in the cell membrane. The enzyme catalyses ATP + H2O + 4 H(+)(in) = ADP + phosphate + 5 H(+)(out). Functionally, produces ATP from ADP in the presence of a proton gradient across the membrane. The catalytic sites are hosted primarily by the beta subunits. The protein is ATP synthase subunit beta of Lactobacillus delbrueckii subsp. bulgaricus (strain ATCC 11842 / DSM 20081 / BCRC 10696 / JCM 1002 / NBRC 13953 / NCIMB 11778 / NCTC 12712 / WDCM 00102 / Lb 14).